Reading from the N-terminus, the 254-residue chain is Flavin-dependent thymidylate synthase (254 aa).

The region spanning 7 to 237 (LRVQLIARTE…PAVFADFEIY (231 aa)) is the ThyX domain. FAD-binding positions include serine 71, 95–97 (RHR), and glutamine 103. DUMP is bound by residues 92-95 (ELIR), 103-107 (QLSQR), and arginine 176. A ThyX motif motif is present at residues 95–105 (RHRHFSYSQLS). Residues 192–194 (NYR) and histidine 198 each bind FAD. Arginine 203 is a binding site for dUMP. Arginine 203 (involved in ionization of N3 of dUMP, leading to its activation) is an active-site residue.

It belongs to the thymidylate synthase ThyX family. Homotetramer. It depends on FAD as a cofactor.

The catalysed reaction is dUMP + (6R)-5,10-methylene-5,6,7,8-tetrahydrofolate + NADPH + H(+) = dTMP + (6S)-5,6,7,8-tetrahydrofolate + NADP(+). It functions in the pathway pyrimidine metabolism; dTTP biosynthesis. In terms of biological role, catalyzes the reductive methylation of 2'-deoxyuridine-5'-monophosphate (dUMP) to 2'-deoxythymidine-5'-monophosphate (dTMP) while utilizing 5,10-methylenetetrahydrofolate (mTHF) as the methyl donor, and NADPH and FADH(2) as the reductant. The polypeptide is Flavin-dependent thymidylate synthase (Mycobacterium sp. (strain KMS)).